We begin with the raw amino-acid sequence, 66 residues long: U-scoloptoxin(04)-Ssd2a (66 aa).

The N-terminal stretch at 1–19 (MKAIYILSVLLLMMLPILS) is a signal peptide.

Belongs to the scoloptoxin-04 family. Contains 2 disulfide bonds. Expressed by the venom gland.

The protein localises to the secreted. The sequence is that of U-scoloptoxin(04)-Ssd2a from Scolopendra dehaani (Thai centipede).